A 171-amino-acid chain; its full sequence is uncharacterized protein (171 aa).

The next 2 helical transmembrane spans lie at 13-35 (VGASLKVPAIAAGAAFFLSIATA) and 50-72 (ATVLALGAGVTAYALRALLAYVV).

The protein resides in the cell membrane. This is an uncharacterized protein from Treponema pallidum (strain Nichols).